Consider the following 125-residue polypeptide: Probable mercury resistance operon repressor (125 aa).

The HTH arsR-type domain occupies 15-109; that stretch reads VPCTHPDTTA…LARCLAADNA (95 aa). Residues 49–68 constitute a DNA-binding region (H-T-H motif); it reads SAECVEHAGISQPRVSVHLS. Positions 69, 73, and 114 each coordinate Hg(2+).

Functionally, negatively regulates the mercuric reductase merA and the organolyase merB in the absence of mercuric ions. This is Probable mercury resistance operon repressor (merR) from Streptomyces lividans.